We begin with the raw amino-acid sequence, 177 residues long: Large ribosomal subunit protein uL6 (177 aa).

It belongs to the universal ribosomal protein uL6 family. Part of the 50S ribosomal subunit.

Functionally, this protein binds to the 23S rRNA, and is important in its secondary structure. It is located near the subunit interface in the base of the L7/L12 stalk, and near the tRNA binding site of the peptidyltransferase center. This is Large ribosomal subunit protein uL6 from Aeromonas salmonicida (strain A449).